The following is a 212-amino-acid chain: Holliday junction branch migration complex subunit RuvA (212 aa).

Residues 1–66 are domain I; the sequence is MISGLKGTLK…ERGQKLFGFL (66 aa). The tract at residues 67–145 is domain II; that stretch reads TEQDKEFFKV…KLELFLSGTS (79 aa). The flexible linker stretch occupies residues 146 to 162; the sequence is KEPSISLSSFSETPEEA. Residues 163–212 are domain III; that stretch reads ALSRKREIAILGLVQLGFEEKTASKEVDKILKSSSPTDPGEIIREILKSL.

This sequence belongs to the RuvA family. Homotetramer. Forms an RuvA(8)-RuvB(12)-Holliday junction (HJ) complex. HJ DNA is sandwiched between 2 RuvA tetramers; dsDNA enters through RuvA and exits via RuvB. An RuvB hexamer assembles on each DNA strand where it exits the tetramer. Each RuvB hexamer is contacted by two RuvA subunits (via domain III) on 2 adjacent RuvB subunits; this complex drives branch migration. In the full resolvosome a probable DNA-RuvA(4)-RuvB(12)-RuvC(2) complex forms which resolves the HJ.

It localises to the cytoplasm. Its function is as follows. The RuvA-RuvB-RuvC complex processes Holliday junction (HJ) DNA during genetic recombination and DNA repair, while the RuvA-RuvB complex plays an important role in the rescue of blocked DNA replication forks via replication fork reversal (RFR). RuvA specifically binds to HJ cruciform DNA, conferring on it an open structure. The RuvB hexamer acts as an ATP-dependent pump, pulling dsDNA into and through the RuvAB complex. HJ branch migration allows RuvC to scan DNA until it finds its consensus sequence, where it cleaves and resolves the cruciform DNA. The chain is Holliday junction branch migration complex subunit RuvA from Leptospira borgpetersenii serovar Hardjo-bovis (strain JB197).